Here is a 274-residue protein sequence, read N- to C-terminus: MIRLHLHLLSDSTGETLENIAKAGLAQFEGVETIKHFWPMVRSQGHLDRILLEIAQRPGLVIFTLVNNDIRTRLESRCHALGLPSVSALDPVIDALSQLLGQQALARPGRQHILDAAYYARVEAIQYTIAHDDGIASEDWEEADIVLTGVSRSSKTPTSIYLANRGYKVANVPLVVESPPPPSFYSLVHPLIVGLTTSPERLVQIRRNRLLSLNQSPETAYVDHERVAAELSFARRIFSDHGWPVIDVTRRSIEETAAAIINLVNERSAKEEAK.

149–156 (GVSRSSKT) lines the ADP pocket.

The protein belongs to the pyruvate, phosphate/water dikinase regulatory protein family. PDRP subfamily.

It catalyses the reaction N(tele)-phospho-L-histidyl/L-threonyl-[pyruvate, phosphate dikinase] + ADP = N(tele)-phospho-L-histidyl/O-phospho-L-threonyl-[pyruvate, phosphate dikinase] + AMP + H(+). The enzyme catalyses N(tele)-phospho-L-histidyl/O-phospho-L-threonyl-[pyruvate, phosphate dikinase] + phosphate + H(+) = N(tele)-phospho-L-histidyl/L-threonyl-[pyruvate, phosphate dikinase] + diphosphate. Bifunctional serine/threonine kinase and phosphorylase involved in the regulation of the pyruvate, phosphate dikinase (PPDK) by catalyzing its phosphorylation/dephosphorylation. The chain is Putative pyruvate, phosphate dikinase regulatory protein from Rhizorhabdus wittichii (strain DSM 6014 / CCUG 31198 / JCM 15750 / NBRC 105917 / EY 4224 / RW1) (Sphingomonas wittichii).